A 406-amino-acid chain; its full sequence is Cytochrome P450 165C4 (406 aa).

Position 356 (Cys356) interacts with heme.

Belongs to the cytochrome P450 family. It depends on heme as a cofactor.

The protein operates within antibiotic biosynthesis; vancomycin biosynthesis. Functionally, involved in the coupling of aromatic side chains of the heptapeptide of vancomycin. The protein is Cytochrome P450 165C4 (cyp165C4) of Amycolatopsis orientalis (Nocardia orientalis).